The sequence spans 113 residues: uncharacterized protein (113 aa).

Residues 7-29 (FFILIVLLFTVFSLKEFIPNTFC) form a helical membrane-spanning segment.

The protein localises to the membrane. This is an uncharacterized protein from Aquifex aeolicus (strain VF5).